Here is a 170-residue protein sequence, read N- to C-terminus: Inner membrane protein p22 (170 aa).

At 1–3 the chain is on the intravirion side; sequence MST. A helical transmembrane segment spans residues 4–24; that stretch reads LLIALIALIVLLIIILVVFLY. At 25-170 the chain is on the virion surface side; it reads YKKQQPPKKV…LYLPRNHKYA (146 aa).

This sequence belongs to the asfivirus inner membrane protein p22 family.

It is found in the virion membrane. Its subcellular location is the host cell membrane. The sequence is that of Inner membrane protein p22 from Ornithodoros (relapsing fever ticks).